A 338-amino-acid chain; its full sequence is Glycerol-3-phosphate dehydrogenase [NAD(P)+] (338 aa).

4 residues coordinate NADPH: serine 14, tyrosine 15, histidine 35, and lysine 109. 3 residues coordinate sn-glycerol 3-phosphate: lysine 109, glycine 138, and threonine 140. An NADPH-binding site is contributed by alanine 142. Residues lysine 194, aspartate 247, serine 257, arginine 258, and asparagine 259 each contribute to the sn-glycerol 3-phosphate site. Lysine 194 functions as the Proton acceptor in the catalytic mechanism. Arginine 258 contacts NADPH. NADPH-binding residues include valine 282 and glutamate 284.

The protein belongs to the NAD-dependent glycerol-3-phosphate dehydrogenase family.

It is found in the cytoplasm. The enzyme catalyses sn-glycerol 3-phosphate + NAD(+) = dihydroxyacetone phosphate + NADH + H(+). The catalysed reaction is sn-glycerol 3-phosphate + NADP(+) = dihydroxyacetone phosphate + NADPH + H(+). It functions in the pathway membrane lipid metabolism; glycerophospholipid metabolism. In terms of biological role, catalyzes the reduction of the glycolytic intermediate dihydroxyacetone phosphate (DHAP) to sn-glycerol 3-phosphate (G3P), the key precursor for phospholipid synthesis. This chain is Glycerol-3-phosphate dehydrogenase [NAD(P)+], found in Shewanella baltica (strain OS185).